The following is a 373-amino-acid chain: Erythronate-4-phosphate dehydrogenase (373 aa).

Residues serine 45 and threonine 66 each contribute to the substrate site. NAD(+)-binding residues include aspartate 146 and threonine 173. The active site involves arginine 206. Aspartate 230 is an NAD(+) binding site. Glutamate 235 is an active-site residue. The active-site Proton donor is the histidine 252. NAD(+) is bound at residue glycine 255. Tyrosine 256 contributes to the substrate binding site.

It belongs to the D-isomer specific 2-hydroxyacid dehydrogenase family. PdxB subfamily. In terms of assembly, homodimer.

It localises to the cytoplasm. The enzyme catalyses 4-phospho-D-erythronate + NAD(+) = (R)-3-hydroxy-2-oxo-4-phosphooxybutanoate + NADH + H(+). It participates in cofactor biosynthesis; pyridoxine 5'-phosphate biosynthesis; pyridoxine 5'-phosphate from D-erythrose 4-phosphate: step 2/5. Its function is as follows. Catalyzes the oxidation of erythronate-4-phosphate to 3-hydroxy-2-oxo-4-phosphonooxybutanoate. In Saccharophagus degradans (strain 2-40 / ATCC 43961 / DSM 17024), this protein is Erythronate-4-phosphate dehydrogenase.